A 463-amino-acid chain; its full sequence is Paraneoplastic antigen Ma3 (463 aa).

The tract at residues 363–410 is disordered; it reads VGAVPLPASGNSFDARPSQGYRRRRGRGQHRRGGVARAGSRGSRKRKR. The span at 383-396 shows a compositional bias: basic residues; that stretch reads YRRRRGRGQHRRGG. Residues 412–429 form a CCHC-type zinc finger; sequence TFCYSCGEDGHIRVQCIN. Residues 440–463 form a disordered region; sequence KQAAVESGNGNWAWDKSHPKSKAK.

It belongs to the PNMA family. Expressed at high levels in the brain and testis. Expressed at lower levels in the heart, trachea and kidney.

Its subcellular location is the nucleus. The protein localises to the nucleolus. This is Paraneoplastic antigen Ma3 (PNMA3) from Homo sapiens (Human).